The chain runs to 373 residues: Peptide chain release factor 1-like, mitochondrial (373 aa).

The transit peptide at 1 to 13 (MRSGFLRSARRLW) directs the protein to the mitochondrion. A coiled-coil region spans residues 56–111 (QLAAAARLLNEKERELRDTESLLHDENEDLKKLAESEIALCQKEIAELKHRIISLL). Residues 229–293 (PKDLRIDTKR…LRARLYSMRL (65 aa)) are GGQ domain. Residues 243–245 (GGQ) carry the GGQ motif. At Q245 the chain carries N5-methylglutamine.

This sequence belongs to the prokaryotic/mitochondrial release factor family. In terms of processing, methylation of glutamine in the GGQ triplet by HEMK1 is conserved from bacteria to mammals.

Its subcellular location is the mitochondrion. In terms of biological role, mitochondrial peptide chain release factor that directs the termination of translation in response to the peptide chain termination codons UAA and UAG. The chain is Peptide chain release factor 1-like, mitochondrial (Mtrf1l) from Rattus norvegicus (Rat).